We begin with the raw amino-acid sequence, 349 residues long: Protein-glutamate methylesterase/protein-glutamine glutaminase 2 (349 aa).

The Response regulatory domain maps to 4 to 121 (SVLVVDDSAL…AEGMQAYAEE (118 aa)). Asp-55 is subject to 4-aspartylphosphate. The CheB-type methylesterase domain occupies 151 to 343 (LLSTEKIIAL…AALLQQAARR (193 aa)). Residues Ser-163, His-189, and Asp-285 contribute to the active site.

This sequence belongs to the CheB family. Interacts with the C-terminal pentapeptide GWEEF of McpB. In terms of processing, phosphorylated by CheA. Phosphorylation of the N-terminal regulatory domain activates the methylesterase activity.

Its subcellular location is the cytoplasm. The catalysed reaction is [protein]-L-glutamate 5-O-methyl ester + H2O = L-glutamyl-[protein] + methanol + H(+). It catalyses the reaction L-glutaminyl-[protein] + H2O = L-glutamyl-[protein] + NH4(+). Functionally, involved in chemotaxis. Part of a chemotaxis signal transduction system that modulates chemotaxis in response to various stimuli. Catalyzes the demethylation of specific methylglutamate residues introduced into the chemoreceptors (methyl-accepting chemotaxis proteins or MCP) by CheR. Also mediates the irreversible deamidation of specific glutamine residues to glutamic acid. Acts on the methyl-accepting chemotaxis protein McpB. May be involved in a specific chemotactic response, which takes place during infection and is required for P.aeruginosa pathogenicity. The polypeptide is Protein-glutamate methylesterase/protein-glutamine glutaminase 2 (Pseudomonas aeruginosa (strain ATCC 15692 / DSM 22644 / CIP 104116 / JCM 14847 / LMG 12228 / 1C / PRS 101 / PAO1)).